The primary structure comprises 358 residues: Glutamate--cysteine ligase (358 aa).

The protein belongs to the glutamate--cysteine ligase type 2 family. YbdK subfamily.

The catalysed reaction is L-cysteine + L-glutamate + ATP = gamma-L-glutamyl-L-cysteine + ADP + phosphate + H(+). Its function is as follows. Catalyzes the synthesis of gamma-glutamylcysteine (gamma-GC), the main low-molecular-weight thiol compound instead of glutathione in halophilic archaea. The sequence is that of Glutamate--cysteine ligase from Haloferax volcanii (strain ATCC 29605 / DSM 3757 / JCM 8879 / NBRC 14742 / NCIMB 2012 / VKM B-1768 / DS2) (Halobacterium volcanii).